Reading from the N-terminus, the 138-residue chain is Large ribosomal subunit protein uL16 (138 aa).

The protein belongs to the universal ribosomal protein uL16 family. Part of the 50S ribosomal subunit.

Functionally, binds 23S rRNA and is also seen to make contacts with the A and possibly P site tRNAs. The sequence is that of Large ribosomal subunit protein uL16 from Chlamydia caviae (strain ATCC VR-813 / DSM 19441 / 03DC25 / GPIC) (Chlamydophila caviae).